The primary structure comprises 196 residues: Potassium-transporting ATPase KdpC subunit (196 aa).

Residues 7 to 27 traverse the membrane as a helical segment; that stretch reads PALVLFFVLTLLTGVAYPLAV.

Belongs to the KdpC family. As to quaternary structure, the system is composed of three essential subunits: KdpA, KdpB and KdpC.

The protein localises to the cell inner membrane. Functionally, part of the high-affinity ATP-driven potassium transport (or Kdp) system, which catalyzes the hydrolysis of ATP coupled with the electrogenic transport of potassium into the cytoplasm. This subunit acts as a catalytic chaperone that increases the ATP-binding affinity of the ATP-hydrolyzing subunit KdpB by the formation of a transient KdpB/KdpC/ATP ternary complex. The sequence is that of Potassium-transporting ATPase KdpC subunit from Polaromonas naphthalenivorans (strain CJ2).